The sequence spans 359 residues: Guanine nucleotide-binding protein alpha-4 subunit (359 aa).

Residue G2 is the site of N-myristoyl glycine attachment. The S-palmitoyl cysteine moiety is linked to residue C3. Residues 31 to 359 enclose the G-alpha domain; that stretch reads GEIKLLLLGA…RNNLYLCGLY (329 aa). The tract at residues 34-47 is G1 motif; the sequence is KLLLLGAGESGKST. Residues 39-46, 178-184, 203-207, 272-275, and A331 each bind GTP; these read GAGESGKS, LRARVKS, DVGGQ, and NKMD. S46 lines the Mg(2+) pocket. A G2 motif region spans residues 176–184; it reads DILRARVKS. The interval 199 to 208 is G3 motif; that stretch reads FKMFDVGGQR. The G4 motif stretch occupies residues 268–275; the sequence is ILFLNKMD. The segment at 329 to 334 is G5 motif; it reads TCATDT.

Belongs to the G-alpha family. G(i/o/t/z) subfamily. G proteins are composed of 3 units; alpha, beta and gamma. The alpha chain contains the guanine nucleotide binding site. As to expression, expressed in ASI neurons.

In terms of biological role, guanine nucleotide-binding proteins (G proteins) are involved as modulators or transducers in various transmembrane signaling systems. Acts in concert with npr-15 to activate TGF-beta-like daf-7 secretion in the ASI neuron, thereby promoting larval development and inhibition of dauer diapause. The sequence is that of Guanine nucleotide-binding protein alpha-4 subunit (gpa-4) from Caenorhabditis elegans.